The primary structure comprises 425 residues: COP9 signalosome complex subunit 1 (425 aa).

The region spanning 219–379 (ASSGVPPEIY…KSKALQTLEN (161 aa)) is the PCI domain.

This sequence belongs to the CSN1 family. As to quaternary structure, component of the COP9 signalosome (CSN) complex.

The protein resides in the cytoplasm. The protein localises to the nucleus. Its function is as follows. Component of the COP9 signalosome (CSN) complex that acts as an regulator of the ubiquitin (Ubl) conjugation pathway by mediating the deneddylation of the cullin subunit of SCF-type E3 ubiquitin-protein ligase complexes. The CSN complex is involved in the regulation of the circadian clock through its control of the stability of the SCF(FWD-1) complex. The sequence is that of COP9 signalosome complex subunit 1 (csn-1) from Neurospora crassa (strain ATCC 24698 / 74-OR23-1A / CBS 708.71 / DSM 1257 / FGSC 987).